The primary structure comprises 372 residues: Caytaxin (372 aa).

Positions 1–58 (MGTTEATLRMENVDVRDEWQDEDLPRPLPEDTGVERLGGAVEDSSSPPSTLNLSGAHR) are disordered. Over residues 11 to 29 (ENVDVRDEWQDEDLPRPLP) the composition is skewed to basic and acidic residues. Positions 43–53 (DSSSPPSTLNL) are enriched in polar residues. At serine 54 the chain carries Phosphoserine. Positions 115 to 120 (ELEWED) are required for interaction with KLC1. The 158-residue stretch at 171–328 (IRPYMKVVTH…CVLQYEEQRL (158 aa)) folds into the CRAL-TRIO domain. A mediates interaction with GLS region spans residues 190–372 (AIIVFAACFL…ATEDQETSMS (183 aa)). The interval 329 to 372 (RAKRESTRPPQPEFLLPRSEEKPETVEEEDRAAEATEDQETSMS) is disordered. Residues 354–372 (VEEEDRAAEATEDQETSMS) are compositionally biased toward acidic residues.

As to quaternary structure, interacts with KLC1; may link mitochondria to KLC1 and regulate mitochondria localization into neuron projections. Interacts with GLS; the interaction is direct and may control GLS localization, negatively regulating its activity. Interacts with PIN1 (via WW domain); upon NGF stimulation. The interaction with PIN1 and GLS is competitive. Post-translationally, cleaved by CASP3 and CASP7. The potential C-terminal product released by CASP3 cleavage may inhibit the ERK signaling pathway through MAP2K2. In terms of processing, may be ubiquitinated by STUB1. Neuronal tissues specific. Strongly expressed in brain. Expressed in virtually all parts of the adult brain, including cortex, cerebellum and olfactory bulbs. Enriched in hippocampus, cerebellar cortex, deep cerebellar nuclei, and pontine nuclei (at protein level).

It localises to the cell projection. The protein localises to the axon. The protein resides in the dendrite. Its subcellular location is the presynapse. It is found in the mitochondrion. It localises to the growth cone. The protein localises to the cytoplasm. In terms of biological role, functions in the development of neural tissues, particularly the postnatal maturation of the cerebellar cortex. May play a role in neurotransmission through regulation of glutaminase/GLS, an enzyme responsible for the production in neurons of the glutamate neurotransmitter. Alternatively, may regulate the localization of mitochondria within axons and dendrites. This is Caytaxin (Atcay) from Mus musculus (Mouse).